The sequence spans 282 residues: MTSADYASRQRAIIAELNVAPHFDAEAEIDRRIDFLAQYLRSTGLRTYVLGISGGVDSSTAGRLAQLSVERLRADGYDARFIAMRLPNGVQNDEEDAQRALAFVRADEVLTVDVKPAADAMLRSLVASGHAFDTPAQQDFVHGNIKARERMIAQYAVAGARRGIVIGTDHAAESLMGFFTKFGDGGADILPLAGLNKRRVRGVARALGGEELIVMKVPTADLEELRPLRPDEHAYGVTYDEIDDFLEGKPVADRVYETVLRFYDGSRHKRALPYTMFDWPAA.

An ATP-binding site is contributed by 51–58 (GISGGVDS). Asp-57 contributes to the Mg(2+) binding site. Arg-148 serves as a coordination point for deamido-NAD(+). Thr-168 contributes to the ATP binding site. Glu-173 is a Mg(2+) binding site. Lys-181 and Asp-188 together coordinate deamido-NAD(+). Residues Lys-197 and Thr-219 each coordinate ATP. Deamido-NAD(+) is bound at residue 268 to 269 (HK).

The protein belongs to the NAD synthetase family. Homodimer.

It carries out the reaction deamido-NAD(+) + NH4(+) + ATP = AMP + diphosphate + NAD(+) + H(+). It participates in cofactor biosynthesis; NAD(+) biosynthesis; NAD(+) from deamido-NAD(+) (ammonia route): step 1/1. In terms of biological role, catalyzes the ATP-dependent amidation of deamido-NAD to form NAD. Uses ammonia as a nitrogen source. The chain is NH(3)-dependent NAD(+) synthetase from Burkholderia cenocepacia (strain ATCC BAA-245 / DSM 16553 / LMG 16656 / NCTC 13227 / J2315 / CF5610) (Burkholderia cepacia (strain J2315)).